The following is a 105-amino-acid chain: Large ribosomal subunit protein uL24 (105 aa).

This sequence belongs to the universal ribosomal protein uL24 family. As to quaternary structure, part of the 50S ribosomal subunit.

In terms of biological role, one of two assembly initiator proteins, it binds directly to the 5'-end of the 23S rRNA, where it nucleates assembly of the 50S subunit. Functionally, one of the proteins that surrounds the polypeptide exit tunnel on the outside of the subunit. This is Large ribosomal subunit protein uL24 from Xylella fastidiosa (strain 9a5c).